Consider the following 326-residue polypeptide: Tagatose 1,6-diphosphate aldolase (326 aa).

Belongs to the aldolase LacD family.

The catalysed reaction is D-tagatofuranose 1,6-bisphosphate = D-glyceraldehyde 3-phosphate + dihydroxyacetone phosphate. It participates in carbohydrate metabolism; D-tagatose 6-phosphate degradation; D-glyceraldehyde 3-phosphate and glycerone phosphate from D-tagatose 6-phosphate: step 2/2. The sequence is that of Tagatose 1,6-diphosphate aldolase from Streptococcus pneumoniae serotype 4 (strain ATCC BAA-334 / TIGR4).